The chain runs to 463 residues: tRNA (guanine(10)-N(2))-methyltransferase TRMT11 (463 aa).

Alanine 2 carries the post-translational modification N-acetylalanine.

This sequence belongs to the class I-like SAM-binding methyltransferase superfamily. TRM11 methyltransferase family. As to quaternary structure, part of the heterodimeric TRMT11-TRM112 methyltransferase complex; this complex forms an active tRNA methyltransferase, where TRMT112 acts as an activator of the catalytic subunit TRMT11.

The protein resides in the cytoplasm. The catalysed reaction is guanosine(10) in tRNA + S-adenosyl-L-methionine = N(2)-methylguanosine(10) in tRNA + S-adenosyl-L-homocysteine + H(+). In terms of biological role, catalytic subunit of the TRMT11-TRM112 methyltransferase complex, that specifically mediates the S-adenosyl-L-methionine-dependent N(2)-methylation of guanosine nucleotide at position 10 (m2G10) in tRNAs. This is one of the major tRNA (guanine-N(2))-methyltransferases. The protein is tRNA (guanine(10)-N(2))-methyltransferase TRMT11 of Pongo abelii (Sumatran orangutan).